Here is a 79-residue protein sequence, read N- to C-terminus: D-alanyl carrier protein (79 aa).

The region spanning 1 to 77 (MDTKQAVLDI…KIIAKVESLR (77 aa)) is the Carrier domain. Ser-35 carries the O-(pantetheine 4'-phosphoryl)serine modification.

The protein belongs to the DltC family. 4'-phosphopantetheine is transferred from CoA to a specific serine of apo-DCP.

It localises to the cytoplasm. The protein operates within cell wall biogenesis; lipoteichoic acid biosynthesis. Its function is as follows. Carrier protein involved in the D-alanylation of lipoteichoic acid (LTA). The loading of thioester-linked D-alanine onto DltC is catalyzed by D-alanine--D-alanyl carrier protein ligase DltA. The DltC-carried D-alanyl group is further transferred to cell membrane phosphatidylglycerol (PG) by forming an ester bond, probably catalyzed by DltD. D-alanylation of LTA plays an important role in modulating the properties of the cell wall in Gram-positive bacteria, influencing the net charge of the cell wall. This chain is D-alanyl carrier protein, found in Lactobacillus johnsonii (strain CNCM I-12250 / La1 / NCC 533).